The chain runs to 742 residues: Condensin complex subunit 2 (742 aa).

Disordered regions lie at residues 1–62 (MKRA…FNSS), 151–172 (QQTE…KKER), 452–473 (FNSS…STER), and 564–604 (IQPH…PSSS). A compositionally biased stretch (basic and acidic residues) spans 21–39 (ALEKKRAKENSRKQRELRR). Residues 53 to 62 (LNNSSPFNSS) are compositionally biased toward polar residues. Positions 154–165 (EEGEDAENDDED) are enriched in acidic residues. Polar residues-rich tracts occupy residues 452–470 (FNSS…SLSS) and 592–604 (PKQT…PSSS).

This sequence belongs to the CND2 (condensin subunit 2) family. Component of the condensin complex, which contains the cut14/smc2 and cut3/smc2 heterodimer, and three non SMC subunits that probably regulate the complex: cnd1, cnd2 and cnd3.

It localises to the nucleus. It is found in the cytoplasm. The protein localises to the chromosome. Functionally, regulatory subunit of the condensin complex, a complex required for conversion of interphase chromatin into mitotic-like condense chromosomes. The condensin complex probably introduces positive supercoils into relaxed DNA in the presence of type I topoisomerases and converts nicked DNA into positive knotted forms in the presence of type II topoisomerases. The condensin complex probably also plays a role during interphase in processes such as DNA repair. The chain is Condensin complex subunit 2 (cnd2) from Schizosaccharomyces pombe (strain 972 / ATCC 24843) (Fission yeast).